We begin with the raw amino-acid sequence, 194 residues long: Oligoribonuclease (194 aa).

An Exonuclease domain is found at leucine 11–leucine 174. The active site involves tyrosine 132.

It belongs to the oligoribonuclease family.

The protein localises to the cytoplasm. Its function is as follows. 3'-to-5' exoribonuclease specific for small oligoribonucleotides. This chain is Oligoribonuclease, found in Xanthomonas axonopodis pv. citri (strain 306).